Consider the following 77-residue polypeptide: Acyl carrier protein (77 aa).

A Carrier domain is found at 2-77; that stretch reads SSIEERVNKI…SAVDYIKAHS (76 aa). The residue at position 37 (Ser37) is an O-(pantetheine 4'-phosphoryl)serine.

The protein belongs to the acyl carrier protein (ACP) family. Post-translationally, 4'-phosphopantetheine is transferred from CoA to a specific serine of apo-ACP by AcpS. This modification is essential for activity because fatty acids are bound in thioester linkage to the sulfhydryl of the prosthetic group.

It localises to the cytoplasm. Its pathway is lipid metabolism; fatty acid biosynthesis. Its function is as follows. Carrier of the growing fatty acid chain in fatty acid biosynthesis. In Alcanivorax borkumensis (strain ATCC 700651 / DSM 11573 / NCIMB 13689 / SK2), this protein is Acyl carrier protein.